Here is a 385-residue protein sequence, read N- to C-terminus: Queuine tRNA-ribosyltransferase (385 aa).

Residue D92 is the Proton acceptor of the active site. Residues 92–96, D146, Q188, and G215 contribute to the substrate site; that span reads DSGGF. The segment at 246 to 252 is RNA binding; sequence GVGHPED. D265 (nucleophile) is an active-site residue. Positions 270-274 are RNA binding; important for wobble base 34 recognition; the sequence is TRTGR. 4 residues coordinate Zn(2+): C303, C305, C308, and H334.

The protein belongs to the queuine tRNA-ribosyltransferase family. Homodimer. Within each dimer, one monomer is responsible for RNA recognition and catalysis, while the other monomer binds to the replacement base PreQ1. Requires Zn(2+) as cofactor.

It catalyses the reaction 7-aminomethyl-7-carbaguanine + guanosine(34) in tRNA = 7-aminomethyl-7-carbaguanosine(34) in tRNA + guanine. It functions in the pathway tRNA modification; tRNA-queuosine biosynthesis. Catalyzes the base-exchange of a guanine (G) residue with the queuine precursor 7-aminomethyl-7-deazaguanine (PreQ1) at position 34 (anticodon wobble position) in tRNAs with GU(N) anticodons (tRNA-Asp, -Asn, -His and -Tyr). Catalysis occurs through a double-displacement mechanism. The nucleophile active site attacks the C1' of nucleotide 34 to detach the guanine base from the RNA, forming a covalent enzyme-RNA intermediate. The proton acceptor active site deprotonates the incoming PreQ1, allowing a nucleophilic attack on the C1' of the ribose to form the product. After dissociation, two additional enzymatic reactions on the tRNA convert PreQ1 to queuine (Q), resulting in the hypermodified nucleoside queuosine (7-(((4,5-cis-dihydroxy-2-cyclopenten-1-yl)amino)methyl)-7-deazaguanosine). In Thermus thermophilus (strain ATCC BAA-163 / DSM 7039 / HB27), this protein is Queuine tRNA-ribosyltransferase.